A 324-amino-acid chain; its full sequence is NADH-cytochrome b5 reductase 2 (324 aa).

A helical transmembrane segment spans residues 31 to 47 (IPLIGGITLAAGAGYYY). The 109-residue stretch at 70-178 (QGWIGLKLAH…KGPLPKYPWE (109 aa)) folds into the FAD-binding FR-type domain. 181-216 (KHDHICLIAGGTGITPMYQLVRKIFSNPEDKTKVTL) contributes to the FAD binding site.

It belongs to the flavoprotein pyridine nucleotide cytochrome reductase family. Requires FAD as cofactor.

Its subcellular location is the mitochondrion outer membrane. The catalysed reaction is 2 Fe(III)-[cytochrome b5] + NADH = 2 Fe(II)-[cytochrome b5] + NAD(+) + H(+). May mediate the reduction of outer membrane cytochrome b5. The polypeptide is NADH-cytochrome b5 reductase 2 (MCR1) (Ajellomyces capsulatus (strain NAm1 / WU24) (Darling's disease fungus)).